We begin with the raw amino-acid sequence, 218 residues long: Holliday junction branch migration complex subunit RuvA (218 aa).

The domain I stretch occupies residues 1 to 64 (MIGKITGRLE…EDVMQLFGFT (64 aa)). The segment at 65 to 143 (TLTEKEWHRL…SVMGMSDTQA (79 aa)) is domain II. Residues 144-164 (TVAAQSSDAVIETRAAPSPVV) form a flexible linker region. The segment at 165–218 (QNPSAQAEALSALSNLGYAPGDAAAAVAQAAGELPDAETPDLIRAALKRLAPKG) is domain III.

It belongs to the RuvA family. As to quaternary structure, homotetramer. Forms an RuvA(8)-RuvB(12)-Holliday junction (HJ) complex. HJ DNA is sandwiched between 2 RuvA tetramers; dsDNA enters through RuvA and exits via RuvB. An RuvB hexamer assembles on each DNA strand where it exits the tetramer. Each RuvB hexamer is contacted by two RuvA subunits (via domain III) on 2 adjacent RuvB subunits; this complex drives branch migration. In the full resolvosome a probable DNA-RuvA(4)-RuvB(12)-RuvC(2) complex forms which resolves the HJ.

The protein resides in the cytoplasm. Its function is as follows. The RuvA-RuvB-RuvC complex processes Holliday junction (HJ) DNA during genetic recombination and DNA repair, while the RuvA-RuvB complex plays an important role in the rescue of blocked DNA replication forks via replication fork reversal (RFR). RuvA specifically binds to HJ cruciform DNA, conferring on it an open structure. The RuvB hexamer acts as an ATP-dependent pump, pulling dsDNA into and through the RuvAB complex. HJ branch migration allows RuvC to scan DNA until it finds its consensus sequence, where it cleaves and resolves the cruciform DNA. This is Holliday junction branch migration complex subunit RuvA from Roseobacter denitrificans (strain ATCC 33942 / OCh 114) (Erythrobacter sp. (strain OCh 114)).